The sequence spans 256 residues: Chitinase 11 (256 aa).

The signal sequence occupies residues 1–22 (MRRLLPLAGATLLIAAAGGASG). Intrachain disulfides connect Cys-48/Cys-109 and Cys-214/Cys-247. The Proton donor role is filled by Glu-91.

The protein belongs to the glycosyl hydrolase 19 family. Chitinase class II subfamily. In terms of tissue distribution, expressed in leaves and at lower levels in roots, sheaths and meristems.

It catalyses the reaction Random endo-hydrolysis of N-acetyl-beta-D-glucosaminide (1-&gt;4)-beta-linkages in chitin and chitodextrins.. The polypeptide is Chitinase 11 (Cht11) (Oryza sativa subsp. japonica (Rice)).